The primary structure comprises 291 residues: 6-deoxy-6-sulfogluconolactonase (291 aa).

A divalent metal cation contacts are provided by E17, N148, and D198. The active-site Proton donor/acceptor is D198.

The protein belongs to the SMP-30/CGR1 family. A divalent metal cation serves as cofactor.

The catalysed reaction is 6-deoxy-6-sulfo-D-glucono-1,5-lactone + H2O = 6-deoxy-6-sulfo-D-gluconate + H(+). Its function is as follows. Catalyzes the hydrolysis of 6-deoxy-6-sulfo-D-glucono-1,5-lactone to form 6-deoxy-6-sulfo-D-gluconate. Is involved in a degradation pathway of sulfoquinovose (SQ) that allows P.putida SQ1 to use SQ as the sole carbon and energy source for growth. In Pseudomonas putida (Arthrobacter siderocapsulatus), this protein is 6-deoxy-6-sulfogluconolactonase.